Reading from the N-terminus, the 596-residue chain is MHAYRTHNCSALRRANVGEKVRLSGWVHRKRDHGGLLFVDLRDHYGLTQIVADSDSAVFEKLDQLRLESVITVTGEVVERAPEVVNPNLATGEIEIRASEVDVQSFAQELPLPVAGEADYPEDIRLRYRYLDLRRDRLHRNIVLRSNVIASLRRRMIEQGFNEYQTPILTASSPEGARDYLVPSRVHPGKFYALPQAPQMFKQLMMVAGFDRYFQIAPCFRDEDARADRSPGEFYQLDFEMSFVTQEDVFATIEPVLAGVFEEFGGGKTVTPAPFPRIAYRDAMLYYGSDKPDLRNPLKISDVTEHFRDSGFGLFAGMVAKGGVVRAIPAPEAGKNSRKFFDDMNNWAREEGFAGLGYINIKNGEAGGPIARNLGEDATQKLLADLGLGENDGVFFAAGKEGEAARLAGLARNRVGELLDLIEKDSFRFCWVVDFPMFEYDEEAKQVIFSHNPFSMPQGGMEALETKDPLDILAYQYDIVCNGIELSSGAIRNHRPEIMYKAFEIAGYDQAMVDENFAGMINAFKYGAPPHGGAAPGVDRMVMLLAGEPNIREVVLFPMNQKAEDLMMGAPAAVSERQLKELSLRIAVKPTQKSAS.

E175 contacts L-aspartate. An aspartate region spans residues 199–202 (QMFK). L-aspartate-binding residues include R221 and H451. 221–223 (RDE) is a binding site for ATP. E485 contacts ATP. R492 serves as a coordination point for L-aspartate. ATP is bound at residue 537-540 (GVDR).

It belongs to the class-II aminoacyl-tRNA synthetase family. Type 1 subfamily. In terms of assembly, homodimer.

The protein resides in the cytoplasm. It carries out the reaction tRNA(Asx) + L-aspartate + ATP = L-aspartyl-tRNA(Asx) + AMP + diphosphate. Its function is as follows. Aspartyl-tRNA synthetase with relaxed tRNA specificity since it is able to aspartylate not only its cognate tRNA(Asp) but also tRNA(Asn). Reaction proceeds in two steps: L-aspartate is first activated by ATP to form Asp-AMP and then transferred to the acceptor end of tRNA(Asp/Asn). The chain is Aspartate--tRNA(Asp/Asn) ligase from Zymomonas mobilis subsp. mobilis (strain ATCC 31821 / ZM4 / CP4).